A 160-amino-acid chain; its full sequence is Bcl-2-like gene 16 protein (160 aa).

The BH1 motif lies at 64–84 (LLTTEHTTNWGKVVAMLSFSA).

Belongs to the Bcl-2 family.

This chain is Bcl-2-like gene 16 protein (16), found in Saimiri sciureus (Common squirrel monkey).